The primary structure comprises 354 residues: Histidinol-phosphate aminotransferase (354 aa).

An N6-(pyridoxal phosphate)lysine modification is found at K210.

It belongs to the class-II pyridoxal-phosphate-dependent aminotransferase family. Histidinol-phosphate aminotransferase subfamily. Homodimer. The cofactor is pyridoxal 5'-phosphate.

It carries out the reaction L-histidinol phosphate + 2-oxoglutarate = 3-(imidazol-4-yl)-2-oxopropyl phosphate + L-glutamate. The protein operates within amino-acid biosynthesis; L-histidine biosynthesis; L-histidine from 5-phospho-alpha-D-ribose 1-diphosphate: step 7/9. This chain is Histidinol-phosphate aminotransferase, found in Clostridium botulinum (strain Okra / Type B1).